We begin with the raw amino-acid sequence, 358 residues long: Peptide chain release factor 1 (358 aa).

The residue at position 233 (Gln-233) is an N5-methylglutamine.

It belongs to the prokaryotic/mitochondrial release factor family. Post-translationally, methylated by PrmC. Methylation increases the termination efficiency of RF1.

It is found in the cytoplasm. Its function is as follows. Peptide chain release factor 1 directs the termination of translation in response to the peptide chain termination codons UAG and UAA. This Macrococcus caseolyticus (strain JCSC5402) (Macrococcoides caseolyticum) protein is Peptide chain release factor 1.